A 297-amino-acid chain; its full sequence is Vesicular-fusion protein SEC17 (297 aa).

Belongs to the SNAP family.

The protein resides in the membrane. Its function is as follows. Required for vesicular transport between the endoplasmic reticulum and the Golgi apparatus. This Komagataella phaffii (strain GS115 / ATCC 20864) (Yeast) protein is Vesicular-fusion protein SEC17 (SEC17).